We begin with the raw amino-acid sequence, 144 residues long: Large ribosomal subunit protein uL13 (144 aa).

It belongs to the universal ribosomal protein uL13 family. In terms of assembly, part of the 50S ribosomal subunit.

In terms of biological role, this protein is one of the early assembly proteins of the 50S ribosomal subunit, although it is not seen to bind rRNA by itself. It is important during the early stages of 50S assembly. This is Large ribosomal subunit protein uL13 from Desulfovibrio desulfuricans (strain ATCC 27774 / DSM 6949 / MB).